The primary structure comprises 554 residues: uncharacterized protein (554 aa).

Disordered stretches follow at residues 1–127 (MTTH…NYND), 139–173 (IEDDEEYEEIGDEESSSGIGGDSEFNDSLNGSKAG), 293–395 (NNNN…PLSE), and 416–509 (FGFS…RKIR). Composition is skewed to low complexity over residues 9-30 (SSSNSSSNNINNNNNNNNNNNI), 46-55 (DPTSSSSPTN), and 63-125 (SNSN…LINY). Over residues 139–153 (IEDDEEYEEIGDEES) the composition is skewed to acidic residues. Residues 164–173 (NDSLNGSKAG) are compositionally biased toward polar residues. Composition is skewed to low complexity over residues 293–387 (NNNN…CSSN), 416–449 (FGFSLSSPTTSSSNNSSNNNNNNNNSNQFFSSIS), and 461–484 (SPPLQSLQSIQPPISQLNNNNNNH). The segment covering 485 to 508 (HNNHHQNHHHQNHNHQHHSKKRKI) has biased composition (basic residues).

This is an uncharacterized protein from Dictyostelium discoideum (Social amoeba).